Consider the following 605-residue polypeptide: MVRHQPLQYYEPQLCLSCLTGIYGCRWKRYQRSHDDTTPWERLWFLLLTFTFGLTLTWLYFWWEVHNDYDEFNWYLYNRMGYWSDWPVPILVTTAAAFAYIAGLLVLALCHIAVGQQMNLHWLHKIGLVVILASTVVAMSAVAQLWEDEWEVLLISLQGTAPFLHVGAVAAVTMLSWIVAGQFARAERTSSQVTILCTFFTVVFALYLAPLTISSPCIMEKKDLGPKPALIGHRGAPMLAPEHTLMSFRKALEQKLYGLQADITISLDGVPFLMHDTTLRRTTNVEEEFPELARRPASMLNWTTLQRLNAGQWFLKTDPFWTASSLSPSDHREAQNQSICSLAELLELAKGNATLLLNLRDPPREHPYRSSFINVTLEAVLHSGFPQHQVMWLPSRQRPLVRKVAPGFQQTSGSKEAVASLRRGHIQRLNLRYTQVSRQELRDYASWNLSVNLYTVNAPWLFSLLWCAGVPSVTSDNSHALSQVPSPLWIMPPDEYCLMWVTADLVSFTLIVGIFVLQKWRLGGIRSYNPEQIMLSAAVRRTSRDVSIMKEKLIFSEISDGVEVSDVLSVCSDNSYDTYANSTATPVGPRGGGSHTKTLIERSGR.

The Cytoplasmic portion of the chain corresponds to 1 to 42 (MVRHQPLQYYEPQLCLSCLTGIYGCRWKRYQRSHDDTTPWER). Disulfide bonds link cysteine 15–cysteine 18 and cysteine 25–cysteine 571. Residues 43-63 (LWFLLLTFTFGLTLTWLYFWW) traverse the membrane as a helical segment. Topologically, residues 64–89 (EVHNDYDEFNWYLYNRMGYWSDWPVP) are extracellular. Residues 90-110 (ILVTTAAAFAYIAGLLVLALC) form a helical membrane-spanning segment. Topologically, residues 111–125 (HIAVGQQMNLHWLHK) are cytoplasmic. A helical membrane pass occupies residues 126-146 (IGLVVILASTVVAMSAVAQLW). At 147–160 (EDEWEVLLISLQGT) the chain is on the extracellular side. The chain crosses the membrane as a helical span at residues 161-181 (APFLHVGAVAAVTMLSWIVAG). Topologically, residues 182-192 (QFARAERTSSQ) are cytoplasmic. A helical membrane pass occupies residues 193 to 213 (VTILCTFFTVVFALYLAPLTI). Residues 214–496 (SSPCIMEKKD…PLWIMPPDEY (283 aa)) lie on the Extracellular side of the membrane. The GP-PDE domain maps to 228-485 (PALIGHRGAP…DNSHALSQVP (258 aa)). Asparagine 301, asparagine 336, asparagine 352, asparagine 374, and asparagine 448 each carry an N-linked (GlcNAc...) asparagine glycan. A helical membrane pass occupies residues 497–517 (CLMWVTADLVSFTLIVGIFVL). The Cytoplasmic segment spans residues 518–605 (QKWRLGGIRS…TKTLIERSGR (88 aa)). The segment at 582 to 605 (STATPVGPRGGGSHTKTLIERSGR) is disordered.

The protein belongs to the glycerophosphoryl diester phosphodiesterase family. In terms of assembly, interacts with PRDX1; forms a mixed-disulfide with PRDX1, leading to disrupt intramolecular disulfide bond between Cys-25 and Cys-571. Intramolecular disulfide bond between Cys-25 and Cys-571 is reduced by PRDX1.

The protein localises to the endomembrane system. It is found in the cytoplasm. Its subcellular location is the perinuclear region. It localises to the cell projection. The protein resides in the growth cone. It catalyses the reaction a 1,2-diacyl-sn-glycero-3-phospho-(1D-myo-inositol-4,5-bisphosphate) + H2O = 1D-myo-inositol 1,4,5-trisphosphate + a 1,2-diacyl-sn-glycerol + H(+). The enzyme catalyses sn-glycerol 3-phosphocholine + H2O = sn-glycerol 3-phosphate + choline + H(+). Functionally, glycerophosphodiester phosphodiesterase that promotes neurite formation and drives spinal motor neuron differentiation. Mediates the cleavage of glycosylphosphatidylinositol (GPI) anchor of target proteins: removes the GPI-anchor of RECK, leading to release RECK from the plasma membrane. May contribute to the osmotic regulation of cellular glycerophosphocholine. This chain is Glycerophosphodiester phosphodiesterase domain-containing protein 5, found in Homo sapiens (Human).